The chain runs to 525 residues: GMP synthase [glutamine-hydrolyzing] (525 aa).

The Glutamine amidotransferase type-1 domain maps to 9 to 207; it reads RILILDFGSQ…VRDICQCEAL (199 aa). Catalysis depends on Cys-86, which acts as the Nucleophile. Active-site residues include His-181 and Glu-183. Residues 208–400 form the GMPS ATP-PPase domain; the sequence is WTPAKIIDDA…LGLPYDMLYR (193 aa). Position 235–241 (235–241) interacts with ATP; the sequence is SGGVDSS.

Homodimer.

It catalyses the reaction XMP + L-glutamine + ATP + H2O = GMP + L-glutamate + AMP + diphosphate + 2 H(+). It functions in the pathway purine metabolism; GMP biosynthesis; GMP from XMP (L-Gln route): step 1/1. Its function is as follows. Catalyzes the synthesis of GMP from XMP. The sequence is that of GMP synthase [glutamine-hydrolyzing] from Salmonella typhimurium (strain LT2 / SGSC1412 / ATCC 700720).